We begin with the raw amino-acid sequence, 127 residues long: Holo-[acyl-carrier-protein] synthase (127 aa).

Residues Asp-7 and Glu-56 each coordinate Mg(2+).

The protein belongs to the P-Pant transferase superfamily. AcpS family. Mg(2+) serves as cofactor.

The protein localises to the cytoplasm. The catalysed reaction is apo-[ACP] + CoA = holo-[ACP] + adenosine 3',5'-bisphosphate + H(+). In terms of biological role, transfers the 4'-phosphopantetheine moiety from coenzyme A to a Ser of acyl-carrier-protein. This Leptospira biflexa serovar Patoc (strain Patoc 1 / Ames) protein is Holo-[acyl-carrier-protein] synthase.